The sequence spans 649 residues: Centrosomal protein of 63 kDa-A (649 aa).

Coiled coils occupy residues 19-185 (DSCE…YQHQ) and 222-556 (EEEL…DAAS). S560 is subject to Phosphoserine; by atm and atr. Positions 612-645 (FLQEEEQRSHELLQRLNAHIEELKQESQRTVEHF) form a coiled coil.

The protein belongs to the CEP63 family. Phosphorylation at Ser-560 by atm and atr promotes its delocalization from the centrosome and impairs its ability to promote centrosome dependent spindle assembly.

It localises to the cytoplasm. The protein localises to the cytoskeleton. Its subcellular location is the microtubule organizing center. The protein resides in the centrosome. It is found in the centriole. Its function is as follows. Required for normal spindle assembly. Plays a key role in mother-centriole-dependent centriole duplication. Plays a role in DNA damage response. Following DNA damage, such as double-strand breaks (DSBs), is removed from centrosomes; this leads to the inactivation of spindle assembly and delay in mitotic progression. The sequence is that of Centrosomal protein of 63 kDa-A (cep63-a) from Xenopus laevis (African clawed frog).